The sequence spans 205 residues: Riboflavin kinase (205 aa).

Residues 1–24 (MRPDTSRDPVAGPDSGPEPPFPIR) are disordered. The Mg(2+) site is built by Thr44 and Asn46. Glu104 (nucleophile) is an active-site residue.

Belongs to the flavokinase family. Requires Zn(2+) as cofactor. Mg(2+) serves as cofactor.

The enzyme catalyses riboflavin + ATP = FMN + ADP + H(+). The protein operates within cofactor biosynthesis; FMN biosynthesis; FMN from riboflavin (ATP route): step 1/1. Functionally, catalyzes the phosphorylation of riboflavin (vitamin B2) to form flavin mononucleotide (FMN) coenzyme. The sequence is that of Riboflavin kinase (fmn1) from Aspergillus terreus (strain NIH 2624 / FGSC A1156).